The primary structure comprises 123 residues: MESSLYKKTSGKARRALRVRKALKGCSLKPRLSVVKTNKHVYVQLIDDVEGKTLAFISTLAKVAKTSGLTRKNQDNAKALGIKIAELGKGLQVDRVVFDRGAHKYHGVVAMVADGAREGGLQF.

This sequence belongs to the universal ribosomal protein uL18 family. As to quaternary structure, part of the 50S ribosomal subunit; part of the 5S rRNA/L5/L18/L25 subcomplex. Contacts the 5S and 23S rRNAs.

This is one of the proteins that bind and probably mediate the attachment of the 5S RNA into the large ribosomal subunit, where it forms part of the central protuberance. This Chlamydia trachomatis serovar L2 (strain ATCC VR-902B / DSM 19102 / 434/Bu) protein is Large ribosomal subunit protein uL18.